Consider the following 168-residue polypeptide: Gamma-glutamylaminecyclotransferase (168 aa).

The segment at 1 to 20 (MPGPECKWSTTETGAPCGTD) is disordered. 32-35 (YGTL) is a binding site for substrate. E107 serves as the catalytic Proton acceptor.

The protein belongs to the gamma-glutamylcyclotransferase family. In terms of assembly, monomer.

The catalysed reaction is epsilon-(gamma-L-glutamyl)-L-lysine = 5-oxo-L-proline + L-lysine. In terms of biological role, contributes to degradation of proteins cross-linked by transglutaminases by degrading the cross-link between a lysine and a glutamic acid residue. Catalyzes the formation of 5-oxo-L-proline from L-gamma-glutamyl-L-epsilon-lysine. Inactive with L-gamma-glutamyl-alpha-amino acid substrates such as L-gamma-glutamyl-L-alpha-cysteine and L-gamma-glutamyl-L-alpha-alanine. This chain is Gamma-glutamylaminecyclotransferase (GGACT), found in Bos taurus (Bovine).